The following is a 505-amino-acid chain: Catalase (505 aa).

Residues His58 and Asn131 contribute to the active site. Tyr341 contacts heme.

This sequence belongs to the catalase family. Heme serves as cofactor.

It catalyses the reaction 2 H2O2 = O2 + 2 H2O. Decomposes hydrogen peroxide into water and oxygen; serves to protect cells from the toxic effects of hydrogen peroxide. The chain is Catalase (kat) from Methanosarcina barkeri (strain Fusaro / DSM 804).